The primary structure comprises 727 residues: MLRIPVKRALIGLSKSPKGYVRSTGTAASNLIEVFVDGQSVMVEPGTTVLQACEKVGMQIPRFCYHERLSVAGNCRMCLVEIEKAPKVVAACAMPVMKGWNILTNSEKSKKAREGVMEFLLANHPLDCPICDQGGECDLQDQSMMFGSDRSRFLEGKRAVEDKNIGPLVKTIMTRCIQCTRCIRFASEIAGVDDLGTTGRGNDMQVGTYIEKMFMSELSGNIIDICPVGALTSKPYAFTARPWETRKTESIDVMDAVGSNIVVSTRTGEVMRILPRMHEDINEEWISDKTRFAYDGLKRQRLTEPMVRNEKGLLTYTSWEDALSRVAGMLQSFEGKAVAAIAGGLVDAEALVALKDLLNKVDSDTLCTEEIFPNEGAGTDLRSNYLLNTTIAGVEEADVVLLVGTNPRFEAPLFNARIRKSWLHNDLKVALIGSPVDLTYRYDHLGDSPKILQDIASGNHEFSKVLNAAKKPMVVLGSSALQRDDGAAILAAVSSIAQKIRVASGAAAEWKVMNILHRIASQVAALDLGYKPGVEAIRKNPPKLLFLLGADGGCITRQDLPKDCFIVYQGHHGDVGAPIADVILPGAAYTEKSATYVNTEGRAQQTKVAVTPPGLAREDWKIIRALSEIAGITLPYDTLDQVRNRLGEVSPNLVRYDDVEEANYFQQASELAKLVDQEFLADPLVPPQLTIKDFYMTDSISRASQTMAKCVKAVTEGAQAVEEPSIC.

A mitochondrion-targeting transit peptide spans 1–23 (MLRIPVKRALIGLSKSPKGYVRS). In terms of domain architecture, 2Fe-2S ferredoxin-type spans 30–108 (NLIEVFVDGQ…GWNILTNSEK (79 aa)). Residues Cys64, Cys75, and Cys78 each contribute to the [2Fe-2S] cluster site. Lys84 carries the post-translational modification N6-acetyllysine. Residue Cys92 participates in [2Fe-2S] cluster binding. Positions 108-147 (KSKKAREGVMEFLLANHPLDCPICDQGGECDLQDQSMMFG) constitute a 4Fe-4S His(Cys)3-ligated-type domain. [4Fe-4S] cluster contacts are provided by His124, Cys128, Cys131, Cys137, Cys176, Cys179, Cys182, and Cys226. Positions 245-301 (TRKTESIDVMDAVGSNIVVSTRTGEVMRILPRMHEDINEEWISDKTRFAYDGLKRQR) constitute a 4Fe-4S Mo/W bis-MGD-type domain. An N6-acetyllysine mark is found at Lys499 and Lys709.

It belongs to the complex I 75 kDa subunit family. As to quaternary structure, core subunit of respiratory chain NADH dehydrogenase (Complex I) which is composed of 45 different subunits. This is the largest subunit of complex I and it is a component of the iron-sulfur (IP) fragment of the enzyme. Complex I associates with ubiquinol-cytochrome reductase complex (Complex III) to form supercomplexes. Interacts with MDM2 and AKAP1. The cofactor is [2Fe-2S] cluster. It depends on [4Fe-4S] cluster as a cofactor.

Its subcellular location is the mitochondrion inner membrane. The enzyme catalyses a ubiquinone + NADH + 5 H(+)(in) = a ubiquinol + NAD(+) + 4 H(+)(out). In terms of biological role, core subunit of the mitochondrial membrane respiratory chain NADH dehydrogenase (Complex I) which catalyzes electron transfer from NADH through the respiratory chain, using ubiquinone as an electron acceptor. Essential for catalysing the entry and efficient transfer of electrons within complex I. Plays a key role in the assembly and stability of complex I and participates in the association of complex I with ubiquinol-cytochrome reductase complex (Complex III) to form supercomplexes. This Rattus norvegicus (Rat) protein is NADH-ubiquinone oxidoreductase 75 kDa subunit, mitochondrial (Ndufs1).